Consider the following 335-residue polypeptide: MCGRTACTLAPDDVRKACTYRDKQGGRKWPNWRDGDSDKYQPSYNKSPQSNSPVLLSLKHFQKDADSSERVLAAMRWGLIPSWFNEPDPSKMQYKTNNCRSDTMTEKALYKASLFKGKRCVVLADGFYEWQRQNSEKQPYYIYFPQIKAEKSPAEQDITDWNGQRLLTMAGLFDCWEPPNGGETLYSYTVITVDSSKTMNWIHDRMPAILDGDEAVRKWLDFGEVPTKDALKLIHPIENITYHPVSTVVNNSRNNTPECMAAIILTQKKGPALSASSKKMLDWLQNKSPKKEESHSIQSPKLSQFGAPPKKTSAGLMQQWLKKEDGEPSPKRAKK.

The Nucleophile role is filled by Cys-2. Cys-2 is subject to Thiazolidine linkage to a ring-opened DNA abasic site. Basic and acidic residues predominate over residues 24 to 39; that stretch reads QGGRKWPNWRDGDSDK. Residues 24 to 51 form a disordered region; it reads QGGRKWPNWRDGDSDKYQPSYNKSPQSN. Residues 40-51 show a composition bias toward polar residues; that stretch reads YQPSYNKSPQSN. Residue Glu-129 is part of the active site. The tract at residues 284–335 is disordered; the sequence is LQNKSPKKEESHSIQSPKLSQFGAPPKKTSAGLMQQWLKKEDGEPSPKRAKK. Basic and acidic residues predominate over residues 321–335; the sequence is LKKEDGEPSPKRAKK.

This sequence belongs to the SOS response-associated peptidase family. Ubiquitination of the hmces DNA-protein cross-link by rfwd3 may promotes its degradation.

Its subcellular location is the chromosome. Formation and reversal of DNA-protein cross-link depends on DNA context. Catalyzes formation of the thiazolidine linkage in presence of abasic sites in single-stranded DNA. Mediates the reversal of the thiazolidine cross-link in presence of double stranded DNA. Functionally, sensor of abasic sites in single-stranded DNA (ssDNA) required to preserve genome integrity by promoting error-free repair of abasic sites. Acts as an enzyme that recognizes and binds abasic sites in ssDNA at replication forks and chemically modifies the lesion by forming a covalent cross-link with DNA: forms a stable thiazolidine linkage between a ring-opened abasic site and the alpha-amino and sulfhydryl substituents of its N-terminal catalytic cysteine residue. The hmces DNA-protein cross-link is then either reversed or degraded. Hmces is able to catalyze the reversal of its thiazolidine cross-link and cycle between a cross-link and a non-cross-linked state depending on DNA context: mediates self-reversal of the thiazolidine cross-link in double stranded DNA, allowing apex1 to initiate downstream repair of abasic sites. The hmces DNA-protein cross-link can also be degraded by the sprtn metalloprotease following unfolding by the brip1/fancj helicase. Promotes error-free repair of abasic sites by protecting abasic sites from translesion synthesis (TLS) polymerases and endonucleases that are error-prone and would generate mutations and double-strand breaks. Acts as a protease: mediates autocatalytic processing of its N-terminal methionine in order to expose the catalytic cysteine. The hmces DNA-protein cross-link is then either reversed or degraded. According to a model, the HMCES DNA-protein cross-link. In Xenopus tropicalis (Western clawed frog), this protein is Abasic site processing protein HMCES.